Here is a 202-residue protein sequence, read N- to C-terminus: Protein-methionine-sulfoxide reductase heme-binding subunit MsrQ (202 aa).

6 consecutive transmembrane segments (helical) span residues 8–28, 50–70, 76–96, 114–134, 148–168, and 174–194; these read YAWL…FLLW, LALI…WLGW, IRKA…GIYL, PFIT…LTSG, LLHR…WWGV, and GPLL…KTPA.

Belongs to the MsrQ family. As to quaternary structure, heterodimer of a catalytic subunit (MsrP) and a heme-binding subunit (MsrQ). Requires FMN as cofactor. It depends on heme b as a cofactor.

It is found in the cell membrane. In terms of biological role, part of the MsrPQ system that repairs oxidized cell envelope proteins containing methionine sulfoxide residues (Met-O), using respiratory chain electrons. Thus protects these proteins from oxidative-stress damage caused by reactive species of oxygen and chlorine. MsrPQ is essential for the maintenance of envelope integrity under bleach stress, rescuing a wide series of structurally unrelated cell envelope proteins from methionine oxidation. MsrQ provides electrons for reduction to the reductase catalytic subunit MsrP, using the quinone pool of the respiratory chain. The sequence is that of Protein-methionine-sulfoxide reductase heme-binding subunit MsrQ from Deinococcus radiodurans (strain ATCC 13939 / DSM 20539 / JCM 16871 / CCUG 27074 / LMG 4051 / NBRC 15346 / NCIMB 9279 / VKM B-1422 / R1).